We begin with the raw amino-acid sequence, 84 residues long: Toxin Tf2 (84 aa).

Residues 1 to 20 (MKRFLLFISILMMIGTIVVG) form the signal peptide. An LCN-type CS-alpha/beta domain is found at 21–83 (KEGYAMDHEG…VWDYATNKCG (63 aa)). Intrachain disulfides connect C31–C82, C35–C58, C43–C63, and C47–C65. C82 is modified (cysteine amide).

This sequence belongs to the long (4 C-C) scorpion toxin superfamily. Sodium channel inhibitor family. Beta subfamily. In terms of processing, contains 4 disulfide bonds. In terms of tissue distribution, expressed by the venom gland.

It localises to the secreted. Beta toxins bind voltage-independently at site-4 of sodium channels (Nav) and shift the voltage of activation toward more negative potentials thereby affecting sodium channel activation and promoting spontaneous and repetitive firing. This toxin is active against hNav1.3/SCN3A. This is Toxin Tf2 from Tityus fasciolatus (Central Brazilian scorpion).